The sequence spans 515 residues: MFSLILLAVTLLTLAWFYLKRHYEYWERRGFPFEKHSGIPFGCLDSVWRQEKSMGLAIYDVYVKSKERVLGIYLLFRPAVLIRDADLARRVLAQDFASFHDRGVYVDEERDPLSANIFSLRGQSWRSMRHMLSPCFTSGKLKSMFSTSEDIGDKMVAHLQKELPEEGFKEVDIKKVMQNYAIDIIASTIFGLDVNSFENPDNKFRKLVSLARANNRFNAMFGMMIFLVPSIAQFLFRIGFKNPVGLAMLQIVKETVEYREKHGIVRKDLLQLLIQLRNTGKIDENDEKSFSIQKTPDGHIKTISLEAITAQAFIFYIAGQETTGSTAAFTIYELAQYPELLKRLQDEVDETLAKNDGKITYDSLNKMEFLDLCVQETIRKYPGLPILNRECTQDYTVPDTNHVIPKGTPVVISLYGIHHDAEYFPDPETYDPERFSEESRNYNPTAFMPFGEGPRICIAQRMGRINSKLAIIKILQNFNVEVMSRSEIEFENSGIALIPKHGVRVRLSKRVPKLS.

Position 457 (C457) interacts with heme.

The protein belongs to the cytochrome P450 family. Requires heme as cofactor.

The protein localises to the endoplasmic reticulum membrane. Its subcellular location is the microsome membrane. Functionally, may be involved in the metabolism of insect hormones and in the breakdown of synthetic insecticides. The chain is Probable cytochrome P450 6d4 (Cyp6d4) from Drosophila melanogaster (Fruit fly).